The following is a 66-amino-acid chain: Panusin (66 aa).

An N-terminal signal peptide occupies residues 1-22 (MKTKAVLMLMLLVLVAATLVQG). Residues 23–26 (EPEP) constitute a propeptide that is removed on maturation. Cystine bridges form between Cys-32–Cys-54, Cys-39–Cys-61, and Cys-44–Cys-60. A Tyrosine amide modification is found at Tyr-65.

As to quaternary structure, forms dimers and higher-order oligomers. In terms of processing, contains 3 disulfide bonds.

In terms of biological role, antimicrobial peptide. Has antibacterial activity against Gram-positive bacteria S.aureus ATCC 29737 and B.subtilis ATCC 6633 as well as against Gram-negative bacteria E.coli ATCC 10536 and K.pneumoniae ATCC 10031. The protein is Panusin of Panulirus argus (Caribbean spiny lobster).